Reading from the N-terminus, the 354-residue chain is tRNA pseudouridine synthase D (354 aa).

D86 (nucleophile) is an active-site residue. In terms of domain architecture, TRUD spans 162–309; sequence GVPNYFGPQR…LEVGRRALRL (148 aa).

The protein belongs to the pseudouridine synthase TruD family.

The catalysed reaction is uridine(13) in tRNA = pseudouridine(13) in tRNA. Its function is as follows. Responsible for synthesis of pseudouridine from uracil-13 in transfer RNAs. The polypeptide is tRNA pseudouridine synthase D (Methylococcus capsulatus (strain ATCC 33009 / NCIMB 11132 / Bath)).